Reading from the N-terminus, the 85-residue chain is Large ribosomal subunit protein bL27 (85 aa).

Residues 1–20 are disordered; that stretch reads MATKKAGGSTRNGRDSEAKR.

This sequence belongs to the bacterial ribosomal protein bL27 family.

In Histophilus somni (strain 129Pt) (Haemophilus somnus), this protein is Large ribosomal subunit protein bL27.